The chain runs to 221 residues: MASLKSIIRQGKQTRSDLKKLRNTGKVPAVVYGYGTKNTSVKVDEVEFIKVIREVGRNGVIDLGVGSKSIKVMVSDYQFDPLKNQITHIDFLAINMTEERTVDVPVHLVGEAAGAKEGGVVEQPLFDLQVTATPENIPESIEVDITELEVNDSYSVSDIKVSGDFTIENDPEESVVTVVPPTDEPTEEEVEAMEGEAATEEPEVVGEEKEEDSEEENKDEE.

Residues 174-221 (SVVTVVPPTDEPTEEEVEAMEGEAATEEPEVVGEEKEEDSEEENKDEE) are disordered. Residues 184–221 (EPTEEEVEAMEGEAATEEPEVVGEEKEEDSEEENKDEE) are compositionally biased toward acidic residues.

This sequence belongs to the bacterial ribosomal protein bL25 family. CTC subfamily. As to quaternary structure, part of the 50S ribosomal subunit; part of the 5S rRNA/L5/L18/L25 subcomplex. Contacts the 5S rRNA. Binds to the 5S rRNA independently of L5 and L18.

This is one of the proteins that binds to the 5S RNA in the ribosome where it forms part of the central protuberance. This chain is Large ribosomal subunit protein bL25, found in Staphylococcus haemolyticus (strain JCSC1435).